The primary structure comprises 800 residues: Fibroblast growth factor receptor 4 (800 aa).

Positions 1–16 (MWLLLALLSIFQETPA) are cleaved as a signal peptide. 3 consecutive Ig-like C2-type domains span residues 17–115 (FSLE…LIMD), 148–236 (PQRM…YLLD), and 245–345 (PILQ…AWLT). Topologically, residues 17 to 367 (FSLEASEEME…TATSEARYTD (351 aa)) are extracellular. A disulfide bridge connects residues Cys54 and Cys98. An N-linked (GlcNAc...) asparagine glycan is attached at Asn109. A disulfide bridge connects residues Cys168 and Cys220. N-linked (GlcNAc...) asparagine glycans are attached at residues Asn254, Asn286, and Asn307. An intrachain disulfide couples Cys267 to Cys329. A helical transmembrane segment spans residues 368-388 (IILYVSGSLALVLLLLLAGVY). Residues 389 to 800 (HRQAIHGHHS…PFPFPEAQTT (412 aa)) are Cytoplasmic-facing. Residues 465–753 (LVLGKPLGEG…VLLAVSEEYL (289 aa)) form the Protein kinase domain. ATP contacts are provided by residues 471–479 (LGEGCFGQV) and Lys501. Position 571 is a phosphoserine (Ser571). Asp610 (proton acceptor) is an active-site residue. 3 positions are modified to phosphotyrosine; by autocatalysis: Tyr640, Tyr641, and Tyr752. Residues 768 to 800 (DASSTCSSSDSVFSHDPLPLEPSPFPFPEAQTT) are disordered. Residues 770–781 (SSTCSSSDSVFS) are compositionally biased toward low complexity.

This sequence belongs to the protein kinase superfamily. Tyr protein kinase family. Fibroblast growth factor receptor subfamily. As to quaternary structure, monomer. Homodimer after ligand binding. Interacts with FGF1, FGF2, FGF4, FGF6, FGF8, FGF9, FGF16, FGF17, FGF18, FGF19, FGF21 and FGF23 (in vitro). Binding affinity for FGF family members is enhanced by interactions between FGFs and heparan sulfate proteoglycans. Interacts with KLB; this strongly increases the affinity for FGF19 and FGF23. Affinity for FGF19 is strongly increased by KLB and sulfated glycosaminoglycans. KLB and KL both interact with the core-glycosylated FGFR4 in the endoplasmic reticulum and promote its degradation, so that only FGFR4 with fully mature N-glycans is expressed at the cell surface. Identified in a complex with NCAM1, CDH2, PLCG1, FRS2, SRC, SHC1, GAP43 and CTTN. Interacts with MMP14 and HIP1. Interacts with STAT3. N-glycosylated. Full maturation of the glycan chains in the Golgi is essential for high affinity interaction with FGF19. Post-translationally, ubiquitinated. Subject to proteasomal degradation when not fully glycosylated. In terms of processing, autophosphorylated. Binding of FGF family members together with heparan sulfate proteoglycan or heparin promotes receptor dimerization and autophosphorylation on tyrosine residues. Autophosphorylation occurs in trans between the two FGFR molecules present in the dimer.

It is found in the cell membrane. The protein resides in the endosome. The protein localises to the endoplasmic reticulum. The catalysed reaction is L-tyrosyl-[protein] + ATP = O-phospho-L-tyrosyl-[protein] + ADP + H(+). Its activity is regulated as follows. Present in an inactive conformation in the absence of bound ligand. Ligand binding leads to dimerization and activation by autophosphorylation on tyrosine residues. Its function is as follows. Tyrosine-protein kinase that acts as a cell-surface receptor for fibroblast growth factors and plays a role in the regulation of cell proliferation, differentiation and migration, and in regulation of lipid metabolism, bile acid biosynthesis, glucose uptake, vitamin D metabolism and phosphate homeostasis. Required for normal down-regulation of the expression of CYP7A1, the rate-limiting enzyme in bile acid synthesis, in response to FGF19. Phosphorylates PLCG1 and FRS2. Ligand binding leads to the activation of several signaling cascades. Activation of PLCG1 leads to the production of the cellular signaling molecules diacylglycerol and inositol 1,4,5-trisphosphate. Phosphorylation of FRS2 triggers recruitment of GRB2, GAB1, PIK3R1 and SOS1, and mediates activation of RAS, MAPK1/ERK2, MAPK3/ERK1 and the MAP kinase signaling pathway, as well as of the AKT1 signaling pathway. Promotes SRC-dependent phosphorylation of the matrix protease MMP14 and its lysosomal degradation. FGFR4 signaling is down-regulated by receptor internalization and degradation; MMP14 promotes internalization and degradation of FGFR4. This Rattus norvegicus (Rat) protein is Fibroblast growth factor receptor 4 (Fgfr4).